Here is a 309-residue protein sequence, read N- to C-terminus: Probable manganese-dependent inorganic pyrophosphatase (309 aa).

Positions 9, 13, 15, 75, 97, and 149 each coordinate Mn(2+).

This sequence belongs to the PPase class C family. It depends on Mn(2+) as a cofactor.

It is found in the cytoplasm. It carries out the reaction diphosphate + H2O = 2 phosphate + H(+). The sequence is that of Probable manganese-dependent inorganic pyrophosphatase from Staphylococcus epidermidis (strain ATCC 12228 / FDA PCI 1200).